Reading from the N-terminus, the 186-residue chain is Nucleoside diphosphate kinase 6 (186 aa).

ATP contacts are provided by Lys19, Phe68, Arg96, Thr102, Arg116, and Asn126. His129 serves as the catalytic Pros-phosphohistidine intermediate.

It belongs to the NDK family. The cofactor is Mg(2+). Expressed at a moderately low level in many tissues. Most abundant in kidney, prostate, ovary, intestine, and spleen.

It catalyses the reaction a 2'-deoxyribonucleoside 5'-diphosphate + ATP = a 2'-deoxyribonucleoside 5'-triphosphate + ADP. The catalysed reaction is a ribonucleoside 5'-diphosphate + ATP = a ribonucleoside 5'-triphosphate + ADP. Its function is as follows. Major role in the synthesis of nucleoside triphosphates other than ATP. The ATP gamma phosphate is transferred to the NDP beta phosphate via a ping-pong mechanism, using a phosphorylated active-site intermediate. Inhibitor of p53-induced apoptosis. The polypeptide is Nucleoside diphosphate kinase 6 (NME6) (Homo sapiens (Human)).